A 122-amino-acid polypeptide reads, in one-letter code: Large ribosomal subunit protein uL18 (122 aa).

This sequence belongs to the universal ribosomal protein uL18 family. As to quaternary structure, part of the 50S ribosomal subunit; part of the 5S rRNA/L5/L18/L25 subcomplex. Contacts the 5S and 23S rRNAs.

Functionally, this is one of the proteins that bind and probably mediate the attachment of the 5S RNA into the large ribosomal subunit, where it forms part of the central protuberance. The chain is Large ribosomal subunit protein uL18 from Kosmotoga olearia (strain ATCC BAA-1733 / DSM 21960 / TBF 19.5.1).